An 85-amino-acid polypeptide reads, in one-letter code: Alpha-insect toxin BjaIT (85 aa).

An N-terminal signal peptide occupies residues 1 to 19; the sequence is MNYLVVICFALLLMTGVES. An LCN-type CS-alpha/beta domain is found at 21-83; sequence RDAYIADNLN…VPIRIPGACR (63 aa). Cystine bridges form between Cys-31–Cys-82, Cys-35–Cys-55, Cys-41–Cys-65, and Cys-45–Cys-67. Arg-83 bears the Arginine amide mark.

Belongs to the long (4 C-C) scorpion toxin superfamily. Sodium channel inhibitor family. Alpha subfamily. As to expression, expressed by the venom gland.

The protein localises to the secreted. Its function is as follows. Alpha toxins bind voltage-independently at site-3 of sodium channels (Nav) and inhibit the inactivation of the activated channels, thereby blocking neuronal transmission. This toxin is active against insects (para/tipE). In Hottentotta judaicus (Black scorpion), this protein is Alpha-insect toxin BjaIT.